We begin with the raw amino-acid sequence, 178 residues long: Large ribosomal subunit protein uL6 (178 aa).

The protein belongs to the universal ribosomal protein uL6 family. In terms of assembly, part of the 50S ribosomal subunit.

This protein binds to the 23S rRNA, and is important in its secondary structure. It is located near the subunit interface in the base of the L7/L12 stalk, and near the tRNA binding site of the peptidyltransferase center. This is Large ribosomal subunit protein uL6 from Streptococcus sanguinis (strain SK36).